A 383-amino-acid chain; its full sequence is 8-amino-7-oxononanoate synthase (383 aa).

Arg22 contributes to the substrate binding site. Residue 109-110 (GF) participates in pyridoxal 5'-phosphate binding. Substrate is bound at residue His134. Positions 178, 206, and 232 each coordinate pyridoxal 5'-phosphate. Lys235 bears the N6-(pyridoxal phosphate)lysine mark. A substrate-binding site is contributed by Thr348.

Belongs to the class-II pyridoxal-phosphate-dependent aminotransferase family. BioF subfamily. In terms of assembly, homodimer. The cofactor is pyridoxal 5'-phosphate.

The catalysed reaction is 6-carboxyhexanoyl-[ACP] + L-alanine + H(+) = (8S)-8-amino-7-oxononanoate + holo-[ACP] + CO2. It functions in the pathway cofactor biosynthesis; biotin biosynthesis. Functionally, catalyzes the decarboxylative condensation of pimeloyl-[acyl-carrier protein] and L-alanine to produce 8-amino-7-oxononanoate (AON), [acyl-carrier protein], and carbon dioxide. The chain is 8-amino-7-oxononanoate synthase from Vibrio campbellii (strain ATCC BAA-1116).